The following is a 264-amino-acid chain: U1 snRNP-associated protein usp106 (264 aa).

Residues 83 to 126 adopt a coiled-coil conformation; that stretch reads DYLEDLERHVDDCNKRIDIAEARREKTKEEEERIDELMRDIIHT. The segment covering 233 to 258 has biased composition (basic and acidic residues); that stretch reads EDREKSRDKKDGEKQRDNLASFEDKI. The disordered stretch occupies residues 233-264; sequence EDREKSRDKKDGEKQRDNLASFEDKISTSFVA.

It belongs to the Luc7 family. Component of the U1 snRNP particle, a subcomplex of the spliceosome.

It is found in the cytoplasm. The protein resides in the nucleus. Its function is as follows. Component of the U1 snRNP particle, which recognizes and binds the 5'-splice site of pre-mRNA. Together with other non-snRNP factors, U1 snRNP forms the spliceosomal commitment complex, that targets pre-mRNA to the splicing pathway. The sequence is that of U1 snRNP-associated protein usp106 (usp106) from Schizosaccharomyces pombe (strain 972 / ATCC 24843) (Fission yeast).